The sequence spans 734 residues: Photosystem I P700 chlorophyll a apoprotein A2 (734 aa).

The next 8 helical transmembrane spans lie at 46–69 (IFAS…FHVA), 135–158 (LYTG…LHLQ), 175–199 (LNHH…HVAI), 273–291 (IAHH…GHMY), 330–353 (LHFQ…QHMY), 369–395 (AALY…IFFI), 417–439 (AIIS…LYVH), and 517–535 (FLVH…LILV). Positions 559 and 568 each coordinate [4Fe-4S] cluster. The next 2 membrane-spanning stretches (helical) occupy residues 575 to 596 (AFYL…YWHW) and 643 to 665 (LSVW…MFLI). 3 residues coordinate chlorophyll a: His654, Met662, and Tyr670. Trp671 contacts phylloquinone. A helical membrane pass occupies residues 707-727 (LVGLAHFSVGYIFTYAAFLIA).

Belongs to the PsaA/PsaB family. The PsaA/B heterodimer binds the P700 chlorophyll special pair and subsequent electron acceptors. PSI consists of a core antenna complex that captures photons, and an electron transfer chain that converts photonic excitation into a charge separation. The eukaryotic PSI reaction center is composed of at least 11 subunits. P700 is a chlorophyll a/chlorophyll a' dimer, A0 is one or more chlorophyll a, A1 is one or both phylloquinones and FX is a shared 4Fe-4S iron-sulfur center. is required as a cofactor.

Its subcellular location is the plastid. It localises to the chloroplast thylakoid membrane. It carries out the reaction reduced [plastocyanin] + hnu + oxidized [2Fe-2S]-[ferredoxin] = oxidized [plastocyanin] + reduced [2Fe-2S]-[ferredoxin]. Its function is as follows. PsaA and PsaB bind P700, the primary electron donor of photosystem I (PSI), as well as the electron acceptors A0, A1 and FX. PSI is a plastocyanin-ferredoxin oxidoreductase, converting photonic excitation into a charge separation, which transfers an electron from the donor P700 chlorophyll pair to the spectroscopically characterized acceptors A0, A1, FX, FA and FB in turn. Oxidized P700 is reduced on the lumenal side of the thylakoid membrane by plastocyanin. This chain is Photosystem I P700 chlorophyll a apoprotein A2, found in Coffea arabica (Arabian coffee).